A 257-amino-acid polypeptide reads, in one-letter code: Phosphonates import ATP-binding protein PhnC (257 aa).

The region spanning 2–246 is the ABC transporter domain; that stretch reads IEFRNVSKVY…KFAEIYGDVV (245 aa). ATP is bound at residue 35 to 42; sequence GLSGAGKS.

The protein belongs to the ABC transporter superfamily. Phosphonates importer (TC 3.A.1.9.1) family. As to quaternary structure, the complex is composed of two ATP-binding proteins (PhnC), two transmembrane proteins (PhnE) and a solute-binding protein (PhnD).

It localises to the cell membrane. The enzyme catalyses phosphonate(out) + ATP + H2O = phosphonate(in) + ADP + phosphate + H(+). Part of the ABC transporter complex PhnCDE involved in phosphonates import. Responsible for energy coupling to the transport system. This chain is Phosphonates import ATP-binding protein PhnC, found in Bacillus anthracis.